The primary structure comprises 159 residues: SsrA-binding protein (159 aa).

Positions 137–147 (LAERQANRETE) are enriched in basic and acidic residues. Residues 137–159 (LAERQANRETEQAVGRRLKGMHD) are disordered.

The protein belongs to the SmpB family.

It localises to the cytoplasm. Its function is as follows. Required for rescue of stalled ribosomes mediated by trans-translation. Binds to transfer-messenger RNA (tmRNA), required for stable association of tmRNA with ribosomes. tmRNA and SmpB together mimic tRNA shape, replacing the anticodon stem-loop with SmpB. tmRNA is encoded by the ssrA gene; the 2 termini fold to resemble tRNA(Ala) and it encodes a 'tag peptide', a short internal open reading frame. During trans-translation Ala-aminoacylated tmRNA acts like a tRNA, entering the A-site of stalled ribosomes, displacing the stalled mRNA. The ribosome then switches to translate the ORF on the tmRNA; the nascent peptide is terminated with the 'tag peptide' encoded by the tmRNA and targeted for degradation. The ribosome is freed to recommence translation, which seems to be the essential function of trans-translation. The protein is SsrA-binding protein of Nocardioides sp. (strain ATCC BAA-499 / JS614).